Reading from the N-terminus, the 854-residue chain is DNA mismatch repair protein MutS (854 aa).

ATP is bound at residue 615-622; the sequence is GPNMGGKS.

Belongs to the DNA mismatch repair MutS family.

This protein is involved in the repair of mismatches in DNA. It is possible that it carries out the mismatch recognition step. This protein has a weak ATPase activity. The protein is DNA mismatch repair protein MutS of Aliivibrio fischeri (strain MJ11) (Vibrio fischeri).